A 138-amino-acid chain; its full sequence is Putative pre-16S rRNA nuclease (138 aa).

This sequence belongs to the YqgF nuclease family.

It localises to the cytoplasm. Its function is as follows. Could be a nuclease involved in processing of the 5'-end of pre-16S rRNA. In Escherichia fergusonii (strain ATCC 35469 / DSM 13698 / CCUG 18766 / IAM 14443 / JCM 21226 / LMG 7866 / NBRC 102419 / NCTC 12128 / CDC 0568-73), this protein is Putative pre-16S rRNA nuclease.